Reading from the N-terminus, the 252-residue chain is Cytochrome c oxidase subunit 2 (252 aa).

Topologically, residues 1 to 39 are mitochondrial intermembrane; it reads MFLIMLKGHILMDAPTPWGIFFQDSASPQMEGIMELHNN. Residues 40-59 form a helical membrane-spanning segment; it reads IMFYLAIILFTVTWMMITII. The Mitochondrial matrix portion of the chain corresponds to 60–81; that stretch reads RNFVAKKSPIAHKYMNHGTLIE. Residues 82–105 traverse the membrane as a helical segment; that stretch reads LIWTITPAFILILIAFPSFKLLYL. At 106 to 252 the chain is on the mitochondrial intermembrane side; sequence MDEVMDPSLV…LLWLRDQMEG (147 aa). Residues His-184, Cys-219, Glu-221, Cys-223, His-227, and Met-230 each coordinate Cu cation. Position 221 (Glu-221) interacts with Mg(2+).

The protein belongs to the cytochrome c oxidase subunit 2 family. In terms of assembly, component of the cytochrome c oxidase (complex IV, CIV), a multisubunit enzyme composed of a catalytic core of 3 subunits and several supernumerary subunits. The complex exists as a monomer or a dimer and forms supercomplexes (SCs) in the inner mitochondrial membrane with ubiquinol-cytochrome c oxidoreductase (cytochrome b-c1 complex, complex III, CIII). Requires Cu cation as cofactor.

Its subcellular location is the mitochondrion inner membrane. It catalyses the reaction 4 Fe(II)-[cytochrome c] + O2 + 8 H(+)(in) = 4 Fe(III)-[cytochrome c] + 2 H2O + 4 H(+)(out). Functionally, component of the cytochrome c oxidase, the last enzyme in the mitochondrial electron transport chain which drives oxidative phosphorylation. The respiratory chain contains 3 multisubunit complexes succinate dehydrogenase (complex II, CII), ubiquinol-cytochrome c oxidoreductase (cytochrome b-c1 complex, complex III, CIII) and cytochrome c oxidase (complex IV, CIV), that cooperate to transfer electrons derived from NADH and succinate to molecular oxygen, creating an electrochemical gradient over the inner membrane that drives transmembrane transport and the ATP synthase. Cytochrome c oxidase is the component of the respiratory chain that catalyzes the reduction of oxygen to water. Electrons originating from reduced cytochrome c in the intermembrane space (IMS) are transferred via the dinuclear copper A center (CU(A)) of subunit 2 and heme A of subunit 1 to the active site in subunit 1, a binuclear center (BNC) formed by heme A3 and copper B (CU(B)). The BNC reduces molecular oxygen to 2 water molecules using 4 electrons from cytochrome c in the IMS and 4 protons from the mitochondrial matrix. The protein is Cytochrome c oxidase subunit 2 (cox2) of Emericella nidulans (Aspergillus nidulans).